The primary structure comprises 190 residues: Small ribosomal subunit protein uS4c (190 aa).

The region spanning 92-152 is the S4 RNA-binding domain; it reads RLDHVVYRAG…KSPSSAQLPP (61 aa).

The protein belongs to the universal ribosomal protein uS4 family. As to quaternary structure, part of the 30S ribosomal subunit. Contacts protein S5. The interaction surface between S4 and S5 is involved in control of translational fidelity.

The protein localises to the plastid. It localises to the chloroplast. In terms of biological role, one of the primary rRNA binding proteins, it binds directly to 16S rRNA where it nucleates assembly of the body of the 30S subunit. Its function is as follows. With S5 and S12 plays an important role in translational accuracy. In Cyanidioschyzon merolae (strain NIES-3377 / 10D) (Unicellular red alga), this protein is Small ribosomal subunit protein uS4c (rps4).